Consider the following 54-residue polypeptide: Ovomucoid (54 aa).

The region spanning 4 to 54 is the Kazal-like domain; that stretch reads VDCSDYPRPVCTLDYMPLCGSDNKTYSNKCNFCNAVVDSNGTITLSHFGRC. Disulfide bonds link Cys-6-Cys-36, Cys-14-Cys-33, and Cys-22-Cys-54. Asn-43 carries N-linked (GlcNAc...) asparagine glycosylation.

The protein resides in the secreted. The protein is Ovomucoid of Corvus albus (Pied crow).